The sequence spans 210 residues: Sortase A (210 aa).

Residues 1–5 are Cytoplasmic-facing; it reads MNKQR. A helical membrane pass occupies residues 6–26; sequence IYSIVAILLFVVGGVLIGKPF. The Extracellular segment spans residues 27–210; that stretch reads YDGYQAEKKQ…GDLVGTKAKK (184 aa). The Proton donor/acceptor role is filled by His126. Residue Cys187 is the Acyl-thioester intermediate of the active site.

This sequence belongs to the bacterial sortase family. Class A subfamily.

It localises to the cell membrane. Inhibited by thiol-reactive reagents. Its function is as follows. Transpeptidase that anchors surface proteins to the cell wall. Recognizes and modifies its substrate by proteolytic cleavage of a C-terminal sorting signal. Following cleavage, a covalent intermediate is formed via a thioester bond between the sortase and its substrate, which is then transferred and covalently attached to the cell wall. This sortase recognizes a Leu-Pro-x-Thr-Gly (LPXTG) motif, which is cleaved by the sortase between the threonine and glycine residues. Important for growth in macrophages. May be critical in the early stages of inhalation anthrax. This Bacillus anthracis protein is Sortase A.